Here is a 255-residue protein sequence, read N- to C-terminus: CCAAT/enhancer-binding protein delta (255 aa).

Disordered regions lie at residues 1 to 42 (MTCA…AAPA), 91 to 121 (GGPA…PGSL), and 138 to 206 (PAAQ…QEMQ). Lys107 is covalently cross-linked (Glycyl lysine isopeptide (Lys-Gly) (interchain with G-Cter in SUMO)). The segment covering 141–161 (QPTPPASPDPPRRSPAPPAPG) has biased composition (pro residues). Residues 163–187 (ARDKAAGKRGPDRGSPEYRQRRERN) show a composition bias toward basic and acidic residues. The region spanning 177 to 240 (SPEYRQRRER…AGLRRFFKQL (64 aa)) is the bZIP domain. Residues 181–208 (RQRRERNNIAVRKSRDKAKRRNQEMQQK) are basic motif. Residues 212-240 (LSAENEKLQQRVEQLTRDLAGLRRFFKQL) form a leucine-zipper region.

It belongs to the bZIP family. C/EBP subfamily. As to quaternary structure, binds DNA as a homodimer and as a heterodimer. Can form stable heterodimers with CEBPA, CEBPB and CEBPE. Directly interacts with SPI1/PU.1; this interaction does not affect DNA-binding properties of each partner. Interacts with PRDM16.

It localises to the nucleus. Its function is as follows. Transcription activator that recognizes two different DNA motifs: the CCAAT homology common to many promoters and the enhanced core homology common to many enhancers. Important transcription factor regulating the expression of genes involved in immune and inflammatory responses. Transcriptional activator that enhances IL6 transcription alone and as heterodimer with CEBPB. The polypeptide is CCAAT/enhancer-binding protein delta (CEBPD) (Ovis aries (Sheep)).